The sequence spans 156 residues: Extracellular giant hemoglobin major globin subunit A1 (156 aa).

The first 16 residues, 1-16 (MKVLIIFACLVVMASA), serve as a signal peptide directing secretion. Positions 17–156 (VCNRLEQILV…YERIASGISG (140 aa)) constitute a Globin domain. Cys18 and Cys146 are joined by a disulfide. Cys79 contributes to the hydrogen sulfide binding site. A heme b-binding site is contributed by His110.

It belongs to the globin family. As to quaternary structure, the 400 kDa hemoglobin consists of a spherical 24-mer arranged as a double layer of dome-shaped dodecamers. Each dodecamer is composed of the 3-fold trimer of the tetramer A1-A2-B1-B2 having one intra-tetramer (A1-B2) disulfide bond and one inter-tetramer (B1-B2) disulfide bond per tetramer.

It localises to the secreted. In terms of biological role, the extracellular giant hemoglobin is able to bind and transport oxygen and hydrosulfide simultaneously and reversibly at two different sites. In Oligobrachia mashikoi (Beard worm), this protein is Extracellular giant hemoglobin major globin subunit A1 (ghbA1).